A 716-amino-acid chain; its full sequence is Dynein axonemal intermediate chain 7 (716 aa).

Belongs to the DNAI7 family. Part of the multisubunit axonemal dynein complex formed at least of two heavy chains and a number of intermediate and light chains. Interacts with tubulin. Associates with microtubule. Ubiquitinated. Ubiquitination leads to its degradation through the 26S proteasome. Ubiquitin-proteasome-mediated DNAI7 degradation occurs in mitosis.

It is found in the cell projection. It localises to the cilium. Its subcellular location is the cytoplasm. Its function is as follows. Via its association with the multisubunit axonemal dynein complex, is potentially involved in the regulation of cilia function. May also act as a cell cycle regulator. The chain is Dynein axonemal intermediate chain 7 from Homo sapiens (Human).